A 242-amino-acid polypeptide reads, in one-letter code: Ribonuclease PH (242 aa).

Phosphate-binding positions include R86 and 124 to 126 (GTR).

This sequence belongs to the RNase PH family. In terms of assembly, homohexameric ring arranged as a trimer of dimers.

It carries out the reaction tRNA(n+1) + phosphate = tRNA(n) + a ribonucleoside 5'-diphosphate. Functionally, phosphorolytic 3'-5' exoribonuclease that plays an important role in tRNA 3'-end maturation. Removes nucleotide residues following the 3'-CCA terminus of tRNAs; can also add nucleotides to the ends of RNA molecules by using nucleoside diphosphates as substrates, but this may not be physiologically important. Probably plays a role in initiation of 16S rRNA degradation (leading to ribosome degradation) during starvation. This chain is Ribonuclease PH, found in Photorhabdus laumondii subsp. laumondii (strain DSM 15139 / CIP 105565 / TT01) (Photorhabdus luminescens subsp. laumondii).